Consider the following 205-residue polypeptide: RNA pyrophosphohydrolase (205 aa).

One can recognise a Nudix hydrolase domain in the interval Gly-6–Arg-149. Positions Gly-38–Gly-59 match the Nudix box motif. The disordered stretch occupies residues Gly-178–Asp-205. The span at Arg-186 to Gly-195 shows a compositional bias: basic residues.

It belongs to the Nudix hydrolase family. RppH subfamily. A divalent metal cation is required as a cofactor.

Accelerates the degradation of transcripts by removing pyrophosphate from the 5'-end of triphosphorylated RNA, leading to a more labile monophosphorylated state that can stimulate subsequent ribonuclease cleavage. The chain is RNA pyrophosphohydrolase from Xanthomonas campestris pv. campestris (strain 8004).